The primary structure comprises 704 residues: Elongation factor G (704 aa).

Residues 8–290 (ARYRNIGISA…AVIDYLPSPV (283 aa)) enclose the tr-type G domain. GTP contacts are provided by residues 17–24 (AHIDAGKT), 88–92 (DTPGH), and 142–145 (NKMD).

The protein belongs to the TRAFAC class translation factor GTPase superfamily. Classic translation factor GTPase family. EF-G/EF-2 subfamily.

It is found in the cytoplasm. Its function is as follows. Catalyzes the GTP-dependent ribosomal translocation step during translation elongation. During this step, the ribosome changes from the pre-translocational (PRE) to the post-translocational (POST) state as the newly formed A-site-bound peptidyl-tRNA and P-site-bound deacylated tRNA move to the P and E sites, respectively. Catalyzes the coordinated movement of the two tRNA molecules, the mRNA and conformational changes in the ribosome. This is Elongation factor G from Cronobacter sakazakii (strain ATCC BAA-894) (Enterobacter sakazakii).